The primary structure comprises 320 residues: Probable cell division protein WhiA (320 aa).

The H-T-H motif DNA-binding region spans 282–315 (SLEELGRAARPQISKDAVAGRIRRLLQRAEKAEQ).

This sequence belongs to the WhiA family.

Functionally, involved in cell division and chromosome segregation. The polypeptide is Probable cell division protein WhiA (Bifidobacterium animalis subsp. lactis (strain AD011)).